Here is a 34-residue protein sequence, read N- to C-terminus: Photosystem II reaction center protein M (34 aa).

A helical transmembrane segment spans residues 5 to 25 (ILAFIATALFILIPTSFLLII).

Belongs to the PsbM family. In terms of assembly, PSII is composed of 1 copy each of membrane proteins PsbA, PsbB, PsbC, PsbD, PsbE, PsbF, PsbH, PsbI, PsbJ, PsbK, PsbL, PsbM, PsbT, PsbX, PsbY, PsbZ, Psb30/Ycf12, at least 3 peripheral proteins of the oxygen-evolving complex and a large number of cofactors. It forms dimeric complexes. Detected in both etioplasts and green leaves; PSII is only assembled in green leaves.

It localises to the plastid. The protein localises to the chloroplast thylakoid membrane. Functionally, one of the components of the core complex of photosystem II (PSII). PSII is a light-driven water:plastoquinone oxidoreductase that uses light energy to abstract electrons from H(2)O, generating O(2) and a proton gradient subsequently used for ATP formation. It consists of a core antenna complex that captures photons, and an electron transfer chain that converts photonic excitation into a charge separation. This subunit is found at the monomer-monomer interface. The polypeptide is Photosystem II reaction center protein M (Hordeum vulgare (Barley)).